The sequence spans 331 residues: Vitamin B12 import system permease protein BtuC (331 aa).

Helical transmembrane passes span 18-38 (WLFG…CAGE), 64-84 (LAVL…QALF), 91-111 (PGLL…VLLG), 114-134 (VLPG…ITFI), 149-169 (LLAG…AVYF), 194-214 (LWLM…SQPL), 243-263 (GWMV…GLVI), 277-297 (VLLP…DIIA), and 305-325 (ELPI…WLLL).

It belongs to the binding-protein-dependent transport system permease family. FecCD subfamily. In terms of assembly, the complex is composed of two ATP-binding proteins (BtuD), two transmembrane proteins (BtuC) and a solute-binding protein (BtuF).

Its subcellular location is the cell inner membrane. Its function is as follows. Part of the ABC transporter complex BtuCDF involved in vitamin B12 import. Involved in the translocation of the substrate across the membrane. This chain is Vitamin B12 import system permease protein BtuC, found in Klebsiella pneumoniae subsp. pneumoniae (strain ATCC 700721 / MGH 78578).